A 176-amino-acid chain; its full sequence is 3-hydroxyacyl-[acyl-carrier-protein] dehydratase FabZ (176 aa).

Residue histidine 54 is part of the active site.

The protein belongs to the thioester dehydratase family. FabZ subfamily.

The protein localises to the cytoplasm. It catalyses the reaction a (3R)-hydroxyacyl-[ACP] = a (2E)-enoyl-[ACP] + H2O. Involved in unsaturated fatty acids biosynthesis. Catalyzes the dehydration of short chain beta-hydroxyacyl-ACPs and long chain saturated and unsaturated beta-hydroxyacyl-ACPs. The protein is 3-hydroxyacyl-[acyl-carrier-protein] dehydratase FabZ of Yersinia pseudotuberculosis serotype O:1b (strain IP 31758).